We begin with the raw amino-acid sequence, 104 residues long: Large ribosomal subunit protein uL24 (104 aa).

It belongs to the universal ribosomal protein uL24 family. Part of the 50S ribosomal subunit.

Functionally, one of two assembly initiator proteins, it binds directly to the 5'-end of the 23S rRNA, where it nucleates assembly of the 50S subunit. Its function is as follows. One of the proteins that surrounds the polypeptide exit tunnel on the outside of the subunit. The polypeptide is Large ribosomal subunit protein uL24 (Buchnera aphidicola subsp. Baizongia pistaciae (strain Bp)).